A 241-amino-acid polypeptide reads, in one-letter code: Triosephosphate isomerase (241 aa).

Residue 9–11 (NWK) participates in substrate binding. The active-site Electrophile is H96. E165 (proton acceptor) is an active-site residue. Residues G171, S204, and 225 to 226 (GG) contribute to the substrate site.

Belongs to the triosephosphate isomerase family. Homodimer.

It is found in the cytoplasm. It catalyses the reaction D-glyceraldehyde 3-phosphate = dihydroxyacetone phosphate. It functions in the pathway carbohydrate biosynthesis; gluconeogenesis. Its pathway is carbohydrate degradation; glycolysis; D-glyceraldehyde 3-phosphate from glycerone phosphate: step 1/1. In terms of biological role, involved in the gluconeogenesis. Catalyzes stereospecifically the conversion of dihydroxyacetone phosphate (DHAP) to D-glyceraldehyde-3-phosphate (G3P). This chain is Triosephosphate isomerase, found in Prochlorococcus marinus subsp. pastoris (strain CCMP1986 / NIES-2087 / MED4).